Reading from the N-terminus, the 104-residue chain is Proteasome subunit beta type-8 (104 aa).

The protein belongs to the peptidase T1B family. As to quaternary structure, the 26S proteasome consists of a 20S proteasome core and two 19S regulatory subunits. The 20S proteasome core is composed of 28 subunits that are arranged in four stacked rings, resulting in a barrel-shaped structure. The two end rings are each formed by seven alpha subunits, and the two central rings are each formed by seven beta subunits. The catalytic chamber with the active sites is on the inside of the barrel. Component of the immunoproteasome, where it displaces the equivalent housekeeping subunit PSMB5. Component of the spermatoproteasome, a form of the proteasome specifically found in testis. Directly interacts with POMP.

The protein resides in the cytoplasm. The protein localises to the nucleus. It carries out the reaction Cleavage of peptide bonds with very broad specificity.. Functionally, the proteasome is a multicatalytic proteinase complex which is characterized by its ability to cleave peptides with Arg, Phe, Tyr, Leu, and Glu adjacent to the leaving group at neutral or slightly basic pH. The proteasome has an ATP-dependent proteolytic activity. This subunit is involved in antigen processing to generate class I binding peptides. May participate in the generation of spliced peptides resulting from the ligation of two separate proteasomal cleavage products that are not contiguous in the parental protein. Required for adipocyte differentiation. The protein is Proteasome subunit beta type-8 (PSMB8) of Sus scrofa (Pig).